Here is a 913-residue protein sequence, read N- to C-terminus: DNA mismatch repair protein MutS (913 aa).

Residue 720–727 coordinates ATP; that stretch reads GPNASGKS.

This sequence belongs to the DNA mismatch repair MutS family.

In terms of biological role, this protein is involved in the repair of mismatches in DNA. It is possible that it carries out the mismatch recognition step. This protein has a weak ATPase activity. The protein is DNA mismatch repair protein MutS of Prochlorococcus marinus (strain AS9601).